Here is a 101-residue protein sequence, read N- to C-terminus: UPF0235 protein Cpha266_2081 (101 aa).

Belongs to the UPF0235 family.

The sequence is that of UPF0235 protein Cpha266_2081 from Chlorobium phaeobacteroides (strain DSM 266 / SMG 266 / 2430).